The primary structure comprises 394 residues: Chalcone synthase (394 aa).

C168 is an active-site residue.

It belongs to the thiolase-like superfamily. Chalcone/stilbene synthases family.

The catalysed reaction is (E)-4-coumaroyl-CoA + 3 malonyl-CoA + 3 H(+) = 2',4,4',6'-tetrahydroxychalcone + 3 CO2 + 4 CoA. The protein operates within secondary metabolite biosynthesis; flavonoid biosynthesis. The primary product of this enzyme is 4,2',4',6'-tetrahydroxychalcone (also termed naringenin-chalcone or chalcone) which can under specific conditions spontaneously isomerize into naringenin. In Raphanus sativus (Radish), this protein is Chalcone synthase (CHS).